The primary structure comprises 773 residues: Histone-lysine N-methyltransferase mes-2 (773 aa).

The segment covering 1–13 (MSNSEPSTSTPSG) has biased composition (polar residues). The interval 1 to 33 (MSNSEPSTSTPSGKTKKRGKKCETSMGKSKKSK) is disordered. The interaction with mes-6 stretch occupies residues 1 to 194 (MSNSEPSTST…TPDQLRLTHM (194 aa)). The region spanning 505 to 614 (IREDDMRDSQ…SNIIKCRNFG (110 aa)) is the CXC domain. Positions 616-737 (TRMIQKRTYC…ISEELTFDYS (122 aa)) constitute an SET domain. Residues 749 to 773 (VQTKERSEKPSRPKSQKLSKPMTSE) are disordered. Over residues 750–759 (QTKERSEKPS) the composition is skewed to basic and acidic residues.

The protein belongs to the class V-like SAM-binding methyltransferase superfamily. Histone-lysine methyltransferase family. EZ subfamily. Interacts directly with mes-6 via its N-terminal domain. Forms a heterotrimeric complex with mes-3 and mes-6. Does not interact with mes-4. In terms of tissue distribution, in adults, it is predominantly expressed in the germline, and weakly expressed in intestinal cells. Expressed in the hypoderm.

It is found in the nucleus. The catalysed reaction is L-lysyl(27)-[histone H3] + 3 S-adenosyl-L-methionine = N(6),N(6),N(6)-trimethyl-L-lysyl(27)-[histone H3] + 3 S-adenosyl-L-homocysteine + 3 H(+). Its function is as follows. Polycomb group (PcG) protein. Catalytic subunit of a the mes-2/mes-3/mes-6 complex, which methylates 'Lys-27' of histone H3, leading to transcriptional repression of the affected target genes. PcG proteins act by forming multiprotein complexes, which are required to maintain the transcriptionally repressive state of homeotic genes throughout development. In association with the nfya-1-NF-Y complex, may play a role in repressing the expression of the homeobox protein egl-5 in tissues such as the head. PcG proteins are not required to initiate repression, but to maintain it during later stages of development. The mes-2/mes-3/mes-6 complex may participate in the global inactivation of the X chromosomes in germline cells. This complex is required to exclude mes-4 from the inactivated X-chromosomes in germline cells. Required for small-RNA-induced H3K27 trimethylation. Involved in the negative regulation of lifespan in a germline-independent fashion. The sequence is that of Histone-lysine N-methyltransferase mes-2 from Caenorhabditis elegans.